A 966-amino-acid chain; its full sequence is Leucine--tRNA ligase (966 aa).

The 'HIGH' region motif lies at 41-51; it reads PYLNGNLHAGH. The 'KMSKS' region signature appears at 632–636; it reads KMSKS. An ATP-binding site is contributed by Lys-635.

This sequence belongs to the class-I aminoacyl-tRNA synthetase family.

The protein localises to the cytoplasm. The enzyme catalyses tRNA(Leu) + L-leucine + ATP = L-leucyl-tRNA(Leu) + AMP + diphosphate. This Methanosarcina barkeri (strain Fusaro / DSM 804) protein is Leucine--tRNA ligase.